We begin with the raw amino-acid sequence, 200 residues long: 3-isopropylmalate dehydratase small subunit (200 aa).

The protein belongs to the LeuD family. LeuD type 1 subfamily. In terms of assembly, heterodimer of LeuC and LeuD.

It carries out the reaction (2R,3S)-3-isopropylmalate = (2S)-2-isopropylmalate. Its pathway is amino-acid biosynthesis; L-leucine biosynthesis; L-leucine from 3-methyl-2-oxobutanoate: step 2/4. In terms of biological role, catalyzes the isomerization between 2-isopropylmalate and 3-isopropylmalate, via the formation of 2-isopropylmaleate. The chain is 3-isopropylmalate dehydratase small subunit from Serratia proteamaculans (strain 568).